Here is a 392-residue protein sequence, read N- to C-terminus: Chorismate synthase (392 aa).

NADP(+) contacts are provided by R39 and R45. FMN is bound by residues 131–133 (RSS), 255–256 (NA), G300, 315–319 (KPIPT), and R341.

It belongs to the chorismate synthase family. In terms of assembly, homotetramer. FMNH2 serves as cofactor.

It catalyses the reaction 5-O-(1-carboxyvinyl)-3-phosphoshikimate = chorismate + phosphate. It participates in metabolic intermediate biosynthesis; chorismate biosynthesis; chorismate from D-erythrose 4-phosphate and phosphoenolpyruvate: step 7/7. Its function is as follows. Catalyzes the anti-1,4-elimination of the C-3 phosphate and the C-6 proR hydrogen from 5-enolpyruvylshikimate-3-phosphate (EPSP) to yield chorismate, which is the branch point compound that serves as the starting substrate for the three terminal pathways of aromatic amino acid biosynthesis. This reaction introduces a second double bond into the aromatic ring system. The protein is Chorismate synthase of Leuconostoc citreum (strain KM20).